Reading from the N-terminus, the 195-residue chain is MSAPQVGVLALQGDTREHLAALREAGAEARTVRRLDELNSVDALVIPGGESTAMSHLLREFGLLEPLRARLAEGMPAYGSCAGMILLATEIADAGVAGREALPLGGIDMTVRRNAFGRQVDSFEEDVEFEGLDGPVHAVFIRAPWVERVGPDVEVLARAGGHPVAVRQGKMLATAFHPEVTGDRRVHRLFVASLS.

Residue 49–51 (GES) coordinates L-glutamine. The Nucleophile role is filled by Cys81. L-glutamine-binding positions include Arg113 and 141-142 (IR). Catalysis depends on charge relay system residues His177 and Glu179.

This sequence belongs to the glutaminase PdxT/SNO family. In terms of assembly, in the presence of PdxS, forms a dodecamer of heterodimers. Only shows activity in the heterodimer.

The catalysed reaction is aldehydo-D-ribose 5-phosphate + D-glyceraldehyde 3-phosphate + L-glutamine = pyridoxal 5'-phosphate + L-glutamate + phosphate + 3 H2O + H(+). It carries out the reaction L-glutamine + H2O = L-glutamate + NH4(+). It functions in the pathway cofactor biosynthesis; pyridoxal 5'-phosphate biosynthesis. Functionally, catalyzes the hydrolysis of glutamine to glutamate and ammonia as part of the biosynthesis of pyridoxal 5'-phosphate. The resulting ammonia molecule is channeled to the active site of PdxS. The chain is Pyridoxal 5'-phosphate synthase subunit PdxT from Mycolicibacterium vanbaalenii (strain DSM 7251 / JCM 13017 / BCRC 16820 / KCTC 9966 / NRRL B-24157 / PYR-1) (Mycobacterium vanbaalenii).